A 253-amino-acid polypeptide reads, in one-letter code: Sulfate transporter CysZ (253 aa).

4 helical membrane passes run 31–51 (FVILPLLVNILLMGGAFWWLF), 75–95 (LLWPLAVISVLLVFGYFFSTI), 151–171 (IVLLILYFIPGIGQTVAPVLW), and 222–242 (IPLLNLFIMPVAVCGATAMWV).

This sequence belongs to the CysZ family.

The protein resides in the cell inner membrane. In terms of biological role, high affinity, high specificity proton-dependent sulfate transporter, which mediates sulfate uptake. Provides the sulfur source for the cysteine synthesis pathway. This is Sulfate transporter CysZ from Escherichia coli O7:K1 (strain IAI39 / ExPEC).